Reading from the N-terminus, the 200-residue chain is MDYKQSNLFLFPIGLGSTYIFYKKICGTFCSIDNDLEVNPYLTHGILMLTLVYFLSDYYLMIVKYNPKHNVYFVHHFIGIVSIYFSYMKYYYLIKYLFAYLTFELSTPFLNIAIKYRNQGVYNKCSIFSELAFFILFTVVRIIFGTYLWFVTSNTLSSIEYPYNYLIVLPTILQFLNYWWYYRILKILRAKLFGCINKED.

The region spanning 1-193 is the TLC domain; sequence MDYKQSNLFL…ILKILRAKLF (193 aa). 6 helical membrane-spanning segments follow: residues 9–29, 43–63, 74–94, 96–116, 131–151, and 165–185; these read FLFP…CGTF, THGI…LMIV, VHHF…YYLI, YLFA…AIKY, LAFF…LWFV, and YLIV…YRIL.

The protein localises to the membrane. The polypeptide is Putative TLC domain-containing protein L438 (Acanthamoeba polyphaga mimivirus (APMV)).